The primary structure comprises 309 residues: D-alanine--D-alanine ligase (309 aa).

The ATP-grasp domain occupies 104–301 (KQIWQGSDLP…FDALCVEILA (198 aa)). 130–185 (VASLGLPVIIKPVHEGSSIGMSKVEKIEDFAPAIEKATAHDAIVMAEKWITGREYT) contacts ATP. The Mg(2+) site is built by Asp255, Glu268, and Asn270.

The protein belongs to the D-alanine--D-alanine ligase family. The cofactor is Mg(2+). Requires Mn(2+) as cofactor.

It localises to the cytoplasm. The enzyme catalyses 2 D-alanine + ATP = D-alanyl-D-alanine + ADP + phosphate + H(+). It functions in the pathway cell wall biogenesis; peptidoglycan biosynthesis. Cell wall formation. The polypeptide is D-alanine--D-alanine ligase (Acinetobacter baylyi (strain ATCC 33305 / BD413 / ADP1)).